We begin with the raw amino-acid sequence, 472 residues long: 3beta,22alpha-dihydroxysteroid 3-dehydrogenase (472 aa).

Residues 1–21 traverse the membrane as a helical segment; sequence MAFTAFLLLLSSIAAGFLLLL. Cys-418 serves as a coordination point for heme.

Belongs to the cytochrome P450 family. It depends on heme as a cofactor.

The protein resides in the membrane. It carries out the reaction (22S)-22-hydroxycampesterol + reduced [NADPH--hemoprotein reductase] + O2 = (22S)-22-hydroxycampest-4-en-3-one + oxidized [NADPH--hemoprotein reductase] + 2 H2O + H(+). It catalyses the reaction 6-deoxoteasterone + reduced [NADPH--hemoprotein reductase] + O2 = 3-dehydro-6-deoxoteasterone + oxidized [NADPH--hemoprotein reductase] + 2 H2O + H(+). The enzyme catalyses 6-deoxycathasterone + reduced [NADPH--hemoprotein reductase] + O2 = (22S,24R)-22-hydroxy-5alpha-ergostan-3-one + oxidized [NADPH--hemoprotein reductase] + 2 H2O + H(+). The catalysed reaction is (22R,23R)-22,23-dihydroxycampesterol + reduced [NADPH--hemoprotein reductase] + O2 = (22R,23R)-22,23-dihydroxycampest-4-en-3-one + oxidized [NADPH--hemoprotein reductase] + 2 H2O + H(+). It participates in plant hormone biosynthesis; brassinosteroid biosynthesis. In terms of biological role, catalyzes C3-oxidation steps in brassinosteroids biosynthesis. Converts (22S)-22-hydroxycampesterol (22-OHCR) to (22S,24R)-22-hydroxyergost-4-en-3-one (22-hydroxy-campesta-4-en-3-one, 22-OH-4-en-3-one), 6-deoxocathasterone (6-deoxoCT) to (22S,24R)-22-hydroxy-5alpha-ergostan-3-one (22-hydroxy-campesta-3-one, 22-OH-3-one), (22R,23R)-22,23-dihydroxycampesterol (22,23-diOHCR) to (22R,23R)-22,23-dihydroxy-campest-4-en-3-one (22,23-diOH-4-en-3-one), and 6-deoxoteasterone (6-deoxoTE) to 3-dehydro-6-deoxoteasterone (6-deoxo3DT, 6-deoxo-3-DHT). This chain is 3beta,22alpha-dihydroxysteroid 3-dehydrogenase, found in Arabidopsis thaliana (Mouse-ear cress).